Consider the following 389-residue polypeptide: uncharacterized protein (389 aa).

This sequence belongs to the mimivirus L17x/L18x family.

This is an uncharacterized protein from Acanthamoeba polyphaga mimivirus (APMV).